The following is a 356-amino-acid chain: uncharacterized protein (356 aa).

6 helical membrane-spanning segments follow: residues 2 to 22, 35 to 55, 76 to 96, 99 to 119, 124 to 144, and 152 to 172; these read IESIIYNVAVMVAGIYLFHRL, GYVTVLMTIVALLLAAYPIPF, NMGYTLVSAVIVALVEVFAFG, LLYGVVLIVIGIIVSMVGPFL, IVALVILNLISVIILLILSIF, and EIAFLVPISFVLTIASAITFV. Residues 218-353 enclose the GGDEF domain; it reads ESLALLLIDI…GRNQVMFNPI (136 aa).

It is found in the cell membrane. This is an uncharacterized protein from Staphylococcus haemolyticus (strain JCSC1435).